A 146-amino-acid polypeptide reads, in one-letter code: MLLQGTHRIGRMAMLLALADENESPVLSIPKGWKYCTGKVGSMNSQKVVAAMETAAKSNQVIETDVYRETHALYHAIMEALYGVTRGQIQLADVLRTVGLRFAIVRGRPYDGKKEGEWVAVALYGTIGAPVKGSEHEAIGLGINHI.

Belongs to the HutP family. In terms of assembly, homohexamer.

Its function is as follows. Antiterminator that binds to cis-acting regulatory sequences on the mRNA in the presence of histidine, thereby suppressing transcription termination and activating the hut operon for histidine utilization. The protein is Hut operon positive regulatory protein of Bacillus cereus (strain G9842).